The primary structure comprises 317 residues: Low affinity immunoglobulin gamma Fc region receptor II-a (317 aa).

A signal peptide spans 1–33; it reads MTMETQMSQNVCPRNLWLLQPLTVLLLLASADS. Residues 34–217 are Extracellular-facing; the sequence is QAAAPPKAVL…PSMGSSSPMG (184 aa). Ig-like C2-type domains lie at 39 to 118 and 122 to 204; these read PKAV…VHLT and EWLV…VTIT. 2 disulfide bridges follow: cysteine 62–cysteine 104 and cysteine 143–cysteine 187. N-linked (GlcNAc...) asparagine glycans are attached at residues asparagine 97 and asparagine 178. A helical transmembrane segment spans residues 218–240; the sequence is IIVAVVIATAVAAIVAAVVALIY. Topologically, residues 241-317 are cytoplasmic; the sequence is CRKKRISANS…PPNDHVNSNN (77 aa). Residues tyrosine 288 and tyrosine 304 each carry the phosphotyrosine; by SRC-type Tyr-kinases modification. The disordered stretch occupies residues 292–317; the sequence is NPRAPTDDDKNIYLTLPPNDHVNSNN.

In terms of assembly, interacts with IGHG1. Interacts with INPP5D/SHIP1 and INPPL1/SHIP2, regulating its function. Interacts with APCS and FGR. Interacts with HCK. Phosphorylated by SRC-type Tyr-kinases such as LYN, BLK, FYN, HCK and SYK. In terms of tissue distribution, found on monocytes, neutrophils and eosinophil platelets.

It localises to the cell membrane. Its function is as follows. Binds to the Fc region of immunoglobulins gamma. Low affinity receptor. By binding to IgG it initiates cellular responses against pathogens and soluble antigens. Promotes phagocytosis of opsonized antigens. The sequence is that of Low affinity immunoglobulin gamma Fc region receptor II-a (FCGR2A) from Homo sapiens (Human).